A 208-amino-acid polypeptide reads, in one-letter code: CASP-like protein 4A4 (208 aa).

At 1-53 (MKELKDHVVVITYGPSSEASVTASPVSQQTPSLFAYSVTPSASRFSSRRASVH) the chain is on the cytoplasmic side. Residues 54 to 74 (VIGLVLRFITMVLCFVSALSL) form a helical membrane-spanning segment. The Extracellular segment spans residues 75–92 (AVNVQRPSKRHLTQNSSS). N89 carries an N-linked (GlcNAc...) asparagine glycan. A helical membrane pass occupies residues 93-113 (FASYPELLYCFGVAVIGFVYT). Over 114-141 (SLQTFKGVCDITHRGVLISEPLSDYISF) the chain is Cytoplasmic. The chain crosses the membrane as a helical span at residues 142 to 162 (IFDQVICYLLVSSSSVAIAWI). The Extracellular segment spans residues 163 to 176 (QHINEDAIKTLRNN). A glycan (N-linked (GlcNAc...) asparagine) is linked at N175. The helical transmembrane segment at 177 to 197 (SIVSVSMSFSAFLVLTLSGLL) threads the bilayer. The Cytoplasmic portion of the chain corresponds to 198–208 (SGYKLCKRFMW).

It belongs to the Casparian strip membrane proteins (CASP) family. In terms of assembly, homodimer and heterodimers.

It localises to the cell membrane. The protein is CASP-like protein 4A4 of Arabidopsis thaliana (Mouse-ear cress).